An 88-amino-acid chain; its full sequence is M-zodatoxin-Lt1a (88 aa).

Residues 1–22 form the signal peptide; that stretch reads MKYFVVALALAVALVCIAESTA. Positions 23 to 62 are excised as a propeptide; sequence YDVNEELENELDDLSDAAWLAKAAEDLQALDDFEESEESR. A Processing quadruplet motif motif is present at residues 59–62; that stretch reads EESR.

In terms of processing, cleavage of the propeptide depends on the processing quadruplet motif (XXXR, with at least one of X being E). As to expression, expressed by the venom gland.

It is found in the secreted. In terms of biological role, has antimicrobial activity against Gram-positive bacteria (A.globiformis VKM Ac-1112 (MIC=0.5 uM), and B.subtilis VKM B-501 (MIC=1.0 uM)), Gram-negative bacteria (E.coli DH5-alpha (MIC=1.0 uM), E.coli MH1 (MIC=0.7 uM), and P.aeruginosa PAO1 (MIC=4.1 uM)), and yeasts (P.pastoris GS115 (MIC=17 uM), and S.cerevisiae Y190 (MIC&gt;33 uM)). Has a moderate hemolytic activity against rabbit erythrocytes. Causes paralysis, but is not lethal when injected into insect (M.domestica) larvae. In Lachesana tarabaevi (Spider), this protein is M-zodatoxin-Lt1a.